The following is a 381-amino-acid chain: Creatine kinase B-type (381 aa).

A Phosphoserine modification is found at Ser-4. Residues 11-98 (KLRFPAEDEF…FDPIIEERHG (88 aa)) enclose the Phosphagen kinase N-terminal domain. The residue at position 35 (Thr-35) is a Phosphothreonine. Residue Lys-45 forms a Glycyl lysine isopeptide (Lys-Gly) (interchain with G-Cter in ubiquitin) linkage. Creatine is bound at residue Val-72. Basic and acidic residues predominate over residues 96 to 110 (RHGGYQPSDEHKTDL). Residues 96–123 (RHGGYQPSDEHKTDLNPDNLQGGDDLDP) form a disordered region. Lys-107 participates in a covalent cross-link: Glycyl lysine isopeptide (Lys-Gly) (interchain with G-Cter in ubiquitin). Tyr-125 is modified (phosphotyrosine). Residues 125–367 (YVLSSRVRTG…KLLIEMEQRL (243 aa)) enclose the Phosphagen kinase C-terminal domain. ATP contacts are provided by residues 128–132 (SSRVR), Arg-130, Arg-132, and His-191. An internal MTS-like signal region spans residues 130–138 (RVRTGRSIR). Position 199 is a phosphoserine (Ser-199). Glu-232 contacts creatine. Arg-236 lines the ATP pocket. Tyr-269 bears the 3'-nitrotyrosine mark. Residue Ser-285 participates in creatine binding. Arg-292 lines the ATP pocket. Phosphoserine is present on Ser-309. ATP-binding positions include Arg-320, 320–325 (RGTGGV), and Asp-335. Thr-322 bears the Phosphothreonine mark. A Glycyl lysine isopeptide (Lys-Gly) (interchain with G-Cter in ubiquitin) cross-link involves residue Lys-381.

Belongs to the ATP:guanido phosphotransferase family. Dimer of identical or non-identical chains, which can be either B (brain type) or M (muscle type). With MM being the major form in skeletal muscle and myocardium, MB existing in myocardium, and BB existing in many tissues, especially brain. Interacts with SLC12A6 (via C-terminus); the interaction may be required for SLC12A6 potassium-chloride cotransport activity. Post-translationally, ubiquitinated by the ECS(ASB9) complex, leading to its degradation by the proteasome. Expressed in hippocampus and corpus callosum (at protein level).

It is found in the cytoplasm. The protein localises to the cytosol. Its subcellular location is the mitochondrion. It localises to the cell membrane. It catalyses the reaction creatine + ATP = N-phosphocreatine + ADP + H(+). In terms of biological role, reversibly catalyzes the transfer of phosphate between ATP and various phosphogens (e.g. creatine phosphate). Creatine kinase isoenzymes play a central role in energy transduction in tissues with large, fluctuating energy demands, such as skeletal muscle, heart, brain and spermatozoa. Acts as a key regulator of adaptive thermogenesis as part of the futile creatine cycle: localizes to the mitochondria of thermogenic fat cells and acts by mediating phosphorylation of creatine to initiate a futile cycle of creatine phosphorylation and dephosphorylation. During the futile creatine cycle, creatine and N-phosphocreatine are in a futile cycle, which dissipates the high energy charge of N-phosphocreatine as heat without performing any mechanical or chemical work. The protein is Creatine kinase B-type of Mus musculus (Mouse).